Here is a 275-residue protein sequence, read N- to C-terminus: MDNMLPSPGYNIPSIGTPIHHQEDESIQTQQQQQTPRHPASFGMNLPHLQHANISQTQDNHMMSPAIQRQHEGSMSIYGPGTPAPATPHTPASVADPGIIPVLENIVSTVNLGCRLDLKKIALQARNAEYNPKRFAAVIMRIREPRTTALIFSSGKMVCTGAKSEEDSRLAARKYARIVQKLGFSAKFLDFKIQNMVGSCDVKFPIRLEGLVLTHGQFSSYEPELFPGLIYRMVKPRIVLLIFVSGKVVLTGAKVRQEIYDAFENIYPILKGFKK.

Disordered regions lie at residues 23–45 (EDESIQTQQQQQTPRHPASFGMN) and 73–92 (GSMSIYGPGTPAPATPHTPA). 2 repeat units span residues 103–179 (LENI…ARIV) and 193–270 (IQNM…YPIL).

The protein belongs to the TBP family. As to quaternary structure, belongs to the TFIID complex together with the TBP-associated factors (TAFs). Binds DNA as monomer.

The protein resides in the nucleus. General transcription factor that functions at the core of the DNA-binding multiprotein factor TFIID. Binding of TFIID to the TATA box is the initial transcriptional step of the pre-initiation complex (PIC), playing a role in the activation of eukaryotic genes transcribed by RNA polymerase II. The protein is TATA-box-binding protein of Artemia franciscana (Brine shrimp).